We begin with the raw amino-acid sequence, 241 residues long: Guanosine phosphorylase (241 aa).

This sequence belongs to the PNP/UDP phosphorylase family.

It carries out the reaction guanosine + phosphate = alpha-D-ribose 1-phosphate + guanine. The enzyme catalyses a purine D-ribonucleoside + phosphate = a purine nucleobase + alpha-D-ribose 1-phosphate. The catalysed reaction is inosine + phosphate = alpha-D-ribose 1-phosphate + hypoxanthine. It catalyses the reaction adenosine + phosphate = alpha-D-ribose 1-phosphate + adenine. Activity is higher at low KCl concentrations. Phosphorylase involved in the non-carboxylating pentose bisphosphate pathway, a nucleoside degradation pathway present in some halophilic archaea. Catalyzes the phosphorolytic cleavage of guanosine to guanine and ribose-1-phosphate (R1P). Exhibits the highest activity toward guanosine, but also shows lower activity against inosine and adenosine. The protein is Guanosine phosphorylase of Halorubrum lacusprofundi (strain ATCC 49239 / DSM 5036 / JCM 8891 / ACAM 34).